The primary structure comprises 129 residues: Transcriptional activator protein (129 aa).

Positions 13-28 match the Nuclear localization signal motif; it reads KAQHKIAKRRAVRRRR. A zinc finger lies at 33 to 50; that stretch reads CGCSIFLHINCADNGFTH. The interval 73–109 is disordered; that stretch reads IFQDTTRRGPVVHQNQDLPHPSPVQPQPTESIGSPQS. Residue S109 is modified to Phosphoserine; by host. The segment at 115–129 is transactivation; it reads SLDDFDESFWADIFK.

This sequence belongs to the geminiviridae transcriptional activator protein family. In terms of assembly, monomer. Homodimer. Homooligomer. Self-interaction correlates with nuclear localization and efficient activation of transcription. Monomers suppress local silencing by interacting with and inactivating host adenosine kinase 2 (ADK2) in the cytoplasm. Interacts with and inhibits host SNF1 kinase. Binds to ssDNA. Post-translationally, phosphorylated at Ser-109 by A.thaliana KIN10.

It localises to the host nucleus. The protein localises to the host cytoplasm. In terms of biological role, strong activator of the late viral genes promoters. Enhances the expression of the capsid protein and nuclear shuttle protein. Acts as a suppressor of RNA-mediated gene silencing, also known as post-transcriptional gene silencing (PTGS), a mechanism of plant viral defense that limits the accumulation of viral RNAs. Suppresses the host RNA silencing by inhibiting adenosine kinase 2 (ADK2), a kinase involved in a general methylation pathway. Also suppresses the host basal defense by interacting with and inhibiting SNF1 kinase, a key regulator of cell metabolism implicated in innate antiviral defense. Determines pathogenicity. This Cabbage leaf curl virus (isolate Jamaica) (CaLCuV) protein is Transcriptional activator protein.